The following is a 311-amino-acid chain: Deoxyhypusine hydroxylase (311 aa).

5 HEAT-like PBS-type repeats span residues 69–95 (LKHEVAYVLGQTKNLHAAQYLRSVLEN), 102–128 (VRHEAAEALGALGDKDSLALLEDYFKN), 196–222 (ERYRAMFRLRDMGTDEACLALASGLDD), 228–254 (FKHEIAYVFGQLCNPVTVPALIKTLKD), and 261–287 (VRHEAAEALGSIATDECLPVLQSFLND). 4 residues coordinate Fe cation: H71, E72, H104, and E105. Fe cation-binding residues include H230, E231, H263, and E264.

The protein belongs to the deoxyhypusine hydroxylase family. Fe(2+) serves as cofactor.

The protein localises to the cytoplasm. It localises to the nucleus. The enzyme catalyses [eIF5A protein]-deoxyhypusine + AH2 + O2 = [eIF5A protein]-hypusine + A + H2O. It functions in the pathway protein modification; eIF5A hypusination. Catalyzes the hydroxylation of the N(6)-(4-aminobutyl)-L-lysine intermediate to form hypusine, an essential post-translational modification only found in mature eIF-5A factor. In Debaryomyces hansenii (strain ATCC 36239 / CBS 767 / BCRC 21394 / JCM 1990 / NBRC 0083 / IGC 2968) (Yeast), this protein is Deoxyhypusine hydroxylase.